The primary structure comprises 185 residues: Ribosome-recycling factor (185 aa).

It belongs to the RRF family.

It localises to the cytoplasm. In terms of biological role, responsible for the release of ribosomes from messenger RNA at the termination of protein biosynthesis. May increase the efficiency of translation by recycling ribosomes from one round of translation to another. The protein is Ribosome-recycling factor of Chromobacterium violaceum (strain ATCC 12472 / DSM 30191 / JCM 1249 / CCUG 213 / NBRC 12614 / NCIMB 9131 / NCTC 9757 / MK).